The following is a 616-amino-acid chain: Dihydroxy-acid dehydratase (616 aa).

Asp-81 is a Mg(2+) binding site. Position 122 (Cys-122) interacts with [2Fe-2S] cluster. Mg(2+) is bound by residues Asp-123 and Lys-124. Lys-124 carries the N6-carboxylysine modification. Residue Cys-195 coordinates [2Fe-2S] cluster. Glu-491 contacts Mg(2+). The active-site Proton acceptor is Ser-517.

Belongs to the IlvD/Edd family. In terms of assembly, homodimer. [2Fe-2S] cluster serves as cofactor. The cofactor is Mg(2+).

It carries out the reaction (2R)-2,3-dihydroxy-3-methylbutanoate = 3-methyl-2-oxobutanoate + H2O. The enzyme catalyses (2R,3R)-2,3-dihydroxy-3-methylpentanoate = (S)-3-methyl-2-oxopentanoate + H2O. It participates in amino-acid biosynthesis; L-isoleucine biosynthesis; L-isoleucine from 2-oxobutanoate: step 3/4. The protein operates within amino-acid biosynthesis; L-valine biosynthesis; L-valine from pyruvate: step 3/4. Functions in the biosynthesis of branched-chain amino acids. Catalyzes the dehydration of (2R,3R)-2,3-dihydroxy-3-methylpentanoate (2,3-dihydroxy-3-methylvalerate) into 2-oxo-3-methylpentanoate (2-oxo-3-methylvalerate) and of (2R)-2,3-dihydroxy-3-methylbutanoate (2,3-dihydroxyisovalerate) into 2-oxo-3-methylbutanoate (2-oxoisovalerate), the penultimate precursor to L-isoleucine and L-valine, respectively. The polypeptide is Dihydroxy-acid dehydratase (Yersinia pseudotuberculosis serotype O:3 (strain YPIII)).